The sequence spans 246 residues: mRNA-decapping protein g5R (246 aa).

The 149-residue stretch at 91–239 folds into the Nudix hydrolase domain; sequence KYQKFKKNWL…IIGPAFNFIK (149 aa). Residues 128–149 carry the Nudix box motif; it reads GKPKENESDLACAIREFEEETG. Residue glutamate 134 participates in Mg(2+) binding. Catalysis depends on glutamate 143, which acts as the Nucleophile. The Mg(2+) site is built by glutamate 147 and glutamate 169.

The protein belongs to the Nudix hydrolase family. DIPP subfamily. Interacts with host RPL23A. Requires Mg(2+) as cofactor. Mn(2+) is required as a cofactor.

It is found in the host rough endoplasmic reticulum. It carries out the reaction diphospho-myo-inositol polyphosphate + H2O = myo-inositol polyphosphate + phosphate.. Functionally, decapping enzyme required for the removal of the 5'-end m7GpppN cap tethered to viral and host mRNAs to allow their decay in cells. May therefore accelerate viral and cellular mRNA turnover to eliminate competing host mRNAs and allow stage-specific synthesis of viral proteins. Acceleration of the turnover of cellular transcripts may even promote the shutoff of host protein synthesis. In addition to the mRNA cap, g5R also efficiently hydrolyzes diphosphoinositol polyphosphates. Down-regulation of the level of PP-InsP5 (diphosphoinositol pentakisphosphate) may play a role in viral manipulation of the cellular secretory pathway, a step necessary for the formation of virions. Binds viral and cellular poly(A) mRNAs, thereby decreasing both types of mRNAs. This African swine fever virus (isolate Pig/Kenya/KEN-50/1950) (ASFV) protein is mRNA-decapping protein g5R.